Reading from the N-terminus, the 208-residue chain is Uracil phosphoribosyltransferase (208 aa).

Residues Arg78, Arg103, and 130 to 138 (DPMLATGGS) contribute to the 5-phospho-alpha-D-ribose 1-diphosphate site. Residues Ile193 and 198–200 (GDA) each bind uracil. Asp199 lines the 5-phospho-alpha-D-ribose 1-diphosphate pocket.

It belongs to the UPRTase family. The cofactor is Mg(2+).

The catalysed reaction is UMP + diphosphate = 5-phospho-alpha-D-ribose 1-diphosphate + uracil. It participates in pyrimidine metabolism; UMP biosynthesis via salvage pathway; UMP from uracil: step 1/1. With respect to regulation, allosterically activated by GTP. Catalyzes the conversion of uracil and 5-phospho-alpha-D-ribose 1-diphosphate (PRPP) to UMP and diphosphate. The protein is Uracil phosphoribosyltransferase of Acholeplasma laidlawii (strain PG-8A).